Here is a 400-residue protein sequence, read N- to C-terminus: MTDSLFPRLVLAKGREKSLLRRHPWIFSGGVARMEGKARSGETIDIVDHQGKWLARGAYSPSSQIRARVWTFDRNEAIDSAFFERRLQQAQTWRAWLAERDGLDSYRLIAGESDGLPGVTIDRFGNFFVLQLLSAGAEYQRAAIISALQNLFPDCAIYDRSDVAVRKKEGLELAQGPVVGELPPALLPITEHGMKLLVDIQGGHKTGYYLDQRDSRLATRRYVADKRVLNCFSYTGGFAVSALMGGCRQVTSVDTSQEALDVARQNVELNGLDLSKAEFVRDDVFKLLRKYRDQGEKFDVIVMDPPKFVENKSQLMGACRGYKDINMLAIQLLNPGGVLLTFSCSGLMTTDLFQKIIADAAIDAGRDVQFIEQFRQAADHPVIATYPEGLYLKGFACRVM.

In terms of domain architecture, PUA spans 6 to 84; sequence FPRLVLAKGR…NEAIDSAFFE (79 aa).

The protein belongs to the methyltransferase superfamily. RlmI family.

The protein localises to the cytoplasm. The enzyme catalyses cytidine(1962) in 23S rRNA + S-adenosyl-L-methionine = 5-methylcytidine(1962) in 23S rRNA + S-adenosyl-L-homocysteine + H(+). Functionally, specifically methylates the cytosine at position 1962 (m5C1962) of 23S rRNA. The chain is Ribosomal RNA large subunit methyltransferase I from Klebsiella pneumoniae (strain 342).